The following is a 300-amino-acid chain: Ornithine carbamoyltransferase (300 aa).

Carbamoyl phosphate contacts are provided by residues 50–53, Gln77, Arg101, and 128–131; these read STRT and HPCQ. L-ornithine is bound by residues Asn159, Asp219, and 223–224; that span reads SM. Residues 257 to 258 and Arg285 contribute to the carbamoyl phosphate site; that span reads CL.

It belongs to the aspartate/ornithine carbamoyltransferase superfamily. OTCase family.

It is found in the cytoplasm. The enzyme catalyses carbamoyl phosphate + L-ornithine = L-citrulline + phosphate + H(+). The protein operates within amino-acid degradation; L-arginine degradation via ADI pathway; carbamoyl phosphate from L-arginine: step 2/2. In terms of biological role, reversibly catalyzes the transfer of the carbamoyl group from carbamoyl phosphate (CP) to the N(epsilon) atom of ornithine (ORN) to produce L-citrulline. The chain is Ornithine carbamoyltransferase from Haloquadratum walsbyi (strain DSM 16790 / HBSQ001).